The sequence spans 328 residues: Beta-ketoacyl-[acyl-carrier-protein] synthase III (328 aa).

Residues Cys-113 and His-253 contribute to the active site. The interval 254–258 (QANLR) is ACP-binding. Asn-283 is a catalytic residue.

It belongs to the thiolase-like superfamily. FabH family. Homodimer.

It is found in the cytoplasm. It catalyses the reaction malonyl-[ACP] + acetyl-CoA + H(+) = 3-oxobutanoyl-[ACP] + CO2 + CoA. It functions in the pathway lipid metabolism; fatty acid biosynthesis. Catalyzes the condensation reaction of fatty acid synthesis by the addition to an acyl acceptor of two carbons from malonyl-ACP. Catalyzes the first condensation reaction which initiates fatty acid synthesis and may therefore play a role in governing the total rate of fatty acid production. Possesses both acetoacetyl-ACP synthase and acetyl transacylase activities. Its substrate specificity determines the biosynthesis of branched-chain and/or straight-chain of fatty acids. This Fusobacterium nucleatum subsp. nucleatum (strain ATCC 25586 / DSM 15643 / BCRC 10681 / CIP 101130 / JCM 8532 / KCTC 2640 / LMG 13131 / VPI 4355) protein is Beta-ketoacyl-[acyl-carrier-protein] synthase III.